A 471-amino-acid chain; its full sequence is ATP synthase subunit beta 2 (471 aa).

157–164 (GGAGVGKT) provides a ligand contact to ATP.

This sequence belongs to the ATPase alpha/beta chains family. In terms of assembly, F-type ATPases have 2 components, CF(1) - the catalytic core - and CF(0) - the membrane proton channel. CF(1) has five subunits: alpha(3), beta(3), gamma(1), delta(1), epsilon(1). CF(0) has three main subunits: a(1), b(2) and c(9-12). The alpha and beta chains form an alternating ring which encloses part of the gamma chain. CF(1) is attached to CF(0) by a central stalk formed by the gamma and epsilon chains, while a peripheral stalk is formed by the delta and b chains.

Its subcellular location is the cell inner membrane. It carries out the reaction ATP + H2O + 4 H(+)(in) = ADP + phosphate + 5 H(+)(out). In terms of biological role, produces ATP from ADP in the presence of a proton gradient across the membrane. The catalytic sites are hosted primarily by the beta subunits. This is ATP synthase subunit beta 2 from Pelobacter propionicus (strain DSM 2379 / NBRC 103807 / OttBd1).